The chain runs to 303 residues: Probable 5-dehydro-4-deoxyglucarate dehydratase (303 aa).

The protein belongs to the DapA family.

The catalysed reaction is 5-dehydro-4-deoxy-D-glucarate + H(+) = 2,5-dioxopentanoate + CO2 + H2O. The protein operates within carbohydrate acid metabolism; D-glucarate degradation; 2,5-dioxopentanoate from D-glucarate: step 2/2. The chain is Probable 5-dehydro-4-deoxyglucarate dehydratase from Pseudomonas savastanoi pv. phaseolicola (strain 1448A / Race 6) (Pseudomonas syringae pv. phaseolicola (strain 1448A / Race 6)).